The primary structure comprises 499 residues: Probable cytosol aminopeptidase (499 aa).

2 residues coordinate Mn(2+): lysine 262 and aspartate 267. Residue lysine 274 is part of the active site. 3 residues coordinate Mn(2+): aspartate 285, aspartate 344, and glutamate 346. Arginine 348 is a catalytic residue.

It belongs to the peptidase M17 family. It depends on Mn(2+) as a cofactor.

The protein resides in the cytoplasm. It carries out the reaction Release of an N-terminal amino acid, Xaa-|-Yaa-, in which Xaa is preferably Leu, but may be other amino acids including Pro although not Arg or Lys, and Yaa may be Pro. Amino acid amides and methyl esters are also readily hydrolyzed, but rates on arylamides are exceedingly low.. The enzyme catalyses Release of an N-terminal amino acid, preferentially leucine, but not glutamic or aspartic acids.. Functionally, presumably involved in the processing and regular turnover of intracellular proteins. Catalyzes the removal of unsubstituted N-terminal amino acids from various peptides. In Protochlamydia amoebophila (strain UWE25), this protein is Probable cytosol aminopeptidase.